Here is a 256-residue protein sequence, read N- to C-terminus: Imidazole glycerol phosphate synthase subunit HisF (256 aa).

Active-site residues include D12 and D131.

This sequence belongs to the HisA/HisF family. In terms of assembly, heterodimer of HisH and HisF.

Its subcellular location is the cytoplasm. It catalyses the reaction 5-[(5-phospho-1-deoxy-D-ribulos-1-ylimino)methylamino]-1-(5-phospho-beta-D-ribosyl)imidazole-4-carboxamide + L-glutamine = D-erythro-1-(imidazol-4-yl)glycerol 3-phosphate + 5-amino-1-(5-phospho-beta-D-ribosyl)imidazole-4-carboxamide + L-glutamate + H(+). The protein operates within amino-acid biosynthesis; L-histidine biosynthesis; L-histidine from 5-phospho-alpha-D-ribose 1-diphosphate: step 5/9. In terms of biological role, IGPS catalyzes the conversion of PRFAR and glutamine to IGP, AICAR and glutamate. The HisF subunit catalyzes the cyclization activity that produces IGP and AICAR from PRFAR using the ammonia provided by the HisH subunit. This is Imidazole glycerol phosphate synthase subunit HisF from Azotobacter vinelandii (strain DJ / ATCC BAA-1303).